The primary structure comprises 223 residues: Cytidylate kinase (223 aa).

Position 10–18 (10–18) interacts with ATP; sequence GPASSGKST.

This sequence belongs to the cytidylate kinase family. Type 1 subfamily.

The protein localises to the cytoplasm. The catalysed reaction is CMP + ATP = CDP + ADP. It catalyses the reaction dCMP + ATP = dCDP + ADP. The polypeptide is Cytidylate kinase (Streptococcus pneumoniae (strain 70585)).